The primary structure comprises 1001 residues: Serine/threonine-protein kinase TAO1 (1001 aa).

Phosphoserine is present on serine 9. Residues 28–281 enclose the Protein kinase domain; it reads FTDLREIGHG…SEELLKHMFV (254 aa). ATP contacts are provided by residues 34–42 and lysine 57; that span reads IGHGSFGAV. Aspartate 151 (proton acceptor) is an active-site residue. Disordered stretches follow at residues 324 to 380 and 404 to 431; these read PAVE…DKSE and ENYQ…HKSH. A compositionally biased stretch (low complexity) spans 350–370; sequence SNQSIPSMSISASSQSSSVNS. Serine 421 and serine 445 each carry phosphoserine. A coiled-coil region spans residues 458–651; that stretch reads SELREQMSGY…QTQKDLEHAM (194 aa). Residues 567-587 form a disordered region; sequence KEELNENQSTPKKEKQEWLSK. Residues 577–587 are compositionally biased toward basic and acidic residues; it reads PKKEKQEWLSK. Threonine 669 bears the Phosphothreonine mark. A coiled-coil region spans residues 754 to 877; the sequence is KAVLKRLKEE…LERQAREIEA (124 aa). A disordered region spans residues 905-1001; the sequence is PGASSWSHNP…ISNGSHMSYT (97 aa). Residues 906–915 are compositionally biased toward polar residues; it reads GASSWSHNPT. At serine 965 the chain carries Phosphoserine. Residues 975–1001 are compositionally biased toward polar residues; sequence GGRTEQGMSRSTSVTSQISNGSHMSYT.

This sequence belongs to the protein kinase superfamily. STE Ser/Thr protein kinase family. STE20 subfamily. Self-associates. Interacts with MAP2K3. Interacts with SPRED1. Interacts with TESK1; the interaction inhibits TAOK1 kinase activity. Interacts with MAP3K7. Post-translationally, proteolytically processed by caspase-3 (CASP3). Autophosphorylated. Phosphorylated by ATM in response to DNA damage. Phosphorylated by LRRK2.

The protein localises to the cytoplasm. It carries out the reaction L-seryl-[protein] + ATP = O-phospho-L-seryl-[protein] + ADP + H(+). The enzyme catalyses L-threonyl-[protein] + ATP = O-phospho-L-threonyl-[protein] + ADP + H(+). With respect to regulation, serine/threonine-protein kinase activity is inhibited by SPRED1. Serine/threonine-protein kinase involved in various processes such as p38/MAPK14 stress-activated MAPK cascade, DNA damage response and regulation of cytoskeleton stability. Phosphorylates MAP2K3, MAP2K6 and MARK2. Acts as an activator of the p38/MAPK14 stress-activated MAPK cascade by mediating phosphorylation and subsequent activation of the upstream MAP2K3 and MAP2K6 kinases. Involved in G-protein coupled receptor signaling to p38/MAPK14. In response to DNA damage, involved in the G2/M transition DNA damage checkpoint by activating the p38/MAPK14 stress-activated MAPK cascade, probably by mediating phosphorylation of MAP2K3 and MAP2K6. Acts as a regulator of cytoskeleton stability by phosphorylating 'Thr-208' of MARK2, leading to activate MARK2 kinase activity and subsequent phosphorylation and detachment of MAPT/TAU from microtubules. Also acts as a regulator of apoptosis: regulates apoptotic morphological changes, including cell contraction, membrane blebbing and apoptotic bodies formation via activation of the MAPK8/JNK cascade. During fetal development, it plays an essential role in the regulation of neuronal differentiation and migration to the cortical plate. The polypeptide is Serine/threonine-protein kinase TAO1 (Taok1) (Rattus norvegicus (Rat)).